The sequence spans 515 residues: Bifunctional purine biosynthesis protein PurH (515 aa).

Residues 1-145 enclose the MGS-like domain; sequence MTKRVLISVS…KNHASVTVVV (145 aa).

It belongs to the PurH family.

It catalyses the reaction (6R)-10-formyltetrahydrofolate + 5-amino-1-(5-phospho-beta-D-ribosyl)imidazole-4-carboxamide = 5-formamido-1-(5-phospho-D-ribosyl)imidazole-4-carboxamide + (6S)-5,6,7,8-tetrahydrofolate. The catalysed reaction is IMP + H2O = 5-formamido-1-(5-phospho-D-ribosyl)imidazole-4-carboxamide. Its pathway is purine metabolism; IMP biosynthesis via de novo pathway; 5-formamido-1-(5-phospho-D-ribosyl)imidazole-4-carboxamide from 5-amino-1-(5-phospho-D-ribosyl)imidazole-4-carboxamide (10-formyl THF route): step 1/1. It participates in purine metabolism; IMP biosynthesis via de novo pathway; IMP from 5-formamido-1-(5-phospho-D-ribosyl)imidazole-4-carboxamide: step 1/1. In Streptococcus pneumoniae (strain 70585), this protein is Bifunctional purine biosynthesis protein PurH.